The primary structure comprises 721 residues: MLLPVFTLKLRHKISPRMVAIGRYDGTHPCLAAATQAGKVFIHNPHMRSQHFSTSRVFQSPLESDVSLLNINQTVSCLGAGVLNPELGYDTLLVGTQTSLLAYDIYNNSDLFYREVADGANALVLGTLGDIAPPLAIIGGNCALQGFDHEGNDLFWTVTGDNVHSLALCDFDGDGKSELLVGSEDFDIRVFKEDEIVAEMTETEIVTSLCPMYGSRFGYALSNGTVGVYDKTARYWRIKSKNHAMSIHAFDINSDGVCELITGWSNGKVDARSDRTGEVIFKDNFSSAVAGVVEGDYRMDGHVQLICCSVDGEIRGYLPGTAEMKGNLLDTSVEQGLIRELSQKKQNLLLELRNYEENTKAELSSPLNEADGQKGIIPANTKLHTALSVNLGNDAQDAHAELRISTSNDTIIRAVLIFAEGIFAGESHVVHPSTHNLSSSIRVPITPPKDVPVDLHLKTFVGYRSSTQFHVFELIRQLPRFTMYALTSPDAASEPVSFVNFIVVERAQRMVTWLNQNFLLPEDSNIQNAPFHVCFTSLRNGGQLYIKMKPSGEITVNTDDIDLAGDIIQSMASFFAIEDLQVEADFPVYFEELRKVLLKVDEYHSVHQKLSANMADNSNLIRSLLVRAEDARLMRDMKTMKTRYMELYDLNKDLLNGYKIRCNNHTELLGNLKAVNQAIQRAGRLRVGKPKNQVISACRDAIRSNNINTLFRIMRVGTAPS.

The stretch at 325 to 369 forms a coiled coil; that stretch reads KGNLLDTSVEQGLIRELSQKKQNLLLELRNYEENTKAELSSPLNE.

In terms of assembly, part of BBSome complex, that contains BBS1, BBS2, BBS4, BBS5, BBS7, BBS8/TTC8, BBS9 and BBIP10. Interacts (via C-terminus) with BBS7. Interacts (via coiled coil domain) with MKKS. Interacts with CCDC28B. Interacts with DLEC1.

The protein resides in the cell projection. The protein localises to the cilium membrane. It is found in the cytoplasm. Its subcellular location is the cytoskeleton. It localises to the microtubule organizing center. The protein resides in the centrosome. The protein localises to the centriolar satellite. Its function is as follows. The BBSome complex is thought to function as a coat complex required for sorting of specific membrane proteins to the primary cilia. The BBSome complex is required for ciliogenesis but is dispensable for centriolar satellite function. This ciliogenic function is mediated in part by the Rab8 GDP/GTP exchange factor, which localizes to the basal body and contacts the BBSome. Rab8(GTP) enters the primary cilium and promotes extension of the ciliary membrane. Firstly the BBSome associates with the ciliary membrane and binds to RAB3IP/Rabin8, the guanosyl exchange factor (GEF) for Rab8 and then the Rab8-GTP localizes to the cilium and promotes docking and fusion of carrier vesicles to the base of the ciliary membrane. The BBSome complex, together with the LTZL1, controls SMO ciliary trafficking and contributes to the sonic hedgehog (SHH) pathway regulation. Required for proper BBSome complex assembly and its ciliary localization. This Rattus norvegicus (Rat) protein is BBSome complex member BBS2 (Bbs2).